A 452-amino-acid chain; its full sequence is Bifunctional protein GlmU (452 aa).

Residues 1–224 (MNIVILAAGQ…EWEVLGVNSK (224 aa)) are pyrophosphorylase. UDP-N-acetyl-alpha-D-glucosamine-binding positions include 6–9 (LAAG), lysine 20, glutamine 71, 76–77 (GT), 98–100 (YGD), glycine 134, glutamate 149, asparagine 164, and asparagine 222. Aspartate 100 is a binding site for Mg(2+). Position 222 (asparagine 222) interacts with Mg(2+). The linker stretch occupies residues 225-245 (VQLAELERQHQLNLAGELLVA). An N-acetyltransferase region spans residues 246–452 (GVRLADPARI…GWERPKKVKK (207 aa)). UDP-N-acetyl-alpha-D-glucosamine is bound by residues arginine 328 and lysine 346. The Proton acceptor role is filled by histidine 358. Residues tyrosine 361 and asparagine 372 each contribute to the UDP-N-acetyl-alpha-D-glucosamine site. Acetyl-CoA contacts are provided by residues alanine 375, 381–382 (NY), serine 400, alanine 418, and arginine 435.

It in the N-terminal section; belongs to the N-acetylglucosamine-1-phosphate uridyltransferase family. The protein in the C-terminal section; belongs to the transferase hexapeptide repeat family. As to quaternary structure, homotrimer. The cofactor is Mg(2+).

It localises to the cytoplasm. It carries out the reaction alpha-D-glucosamine 1-phosphate + acetyl-CoA = N-acetyl-alpha-D-glucosamine 1-phosphate + CoA + H(+). It catalyses the reaction N-acetyl-alpha-D-glucosamine 1-phosphate + UTP + H(+) = UDP-N-acetyl-alpha-D-glucosamine + diphosphate. It participates in nucleotide-sugar biosynthesis; UDP-N-acetyl-alpha-D-glucosamine biosynthesis; N-acetyl-alpha-D-glucosamine 1-phosphate from alpha-D-glucosamine 6-phosphate (route II): step 2/2. The protein operates within nucleotide-sugar biosynthesis; UDP-N-acetyl-alpha-D-glucosamine biosynthesis; UDP-N-acetyl-alpha-D-glucosamine from N-acetyl-alpha-D-glucosamine 1-phosphate: step 1/1. It functions in the pathway bacterial outer membrane biogenesis; LPS lipid A biosynthesis. Functionally, catalyzes the last two sequential reactions in the de novo biosynthetic pathway for UDP-N-acetylglucosamine (UDP-GlcNAc). The C-terminal domain catalyzes the transfer of acetyl group from acetyl coenzyme A to glucosamine-1-phosphate (GlcN-1-P) to produce N-acetylglucosamine-1-phosphate (GlcNAc-1-P), which is converted into UDP-GlcNAc by the transfer of uridine 5-monophosphate (from uridine 5-triphosphate), a reaction catalyzed by the N-terminal domain. The sequence is that of Bifunctional protein GlmU from Dechloromonas aromatica (strain RCB).